The primary structure comprises 261 residues: Claudin-18 (261 aa).

Residues 1-6 (MSTTRC) lie on the Cytoplasmic side of the membrane. A helical transmembrane segment spans residues 7–27 (QVVGFLLSILGLAGCIVATEM). The Extracellular portion of the chain corresponds to 28–80 (DMWSTQDLYDNPVTAVFQYEGLWRSCVQQSSGFTECRPYLTILGLPAMLQAVR). Residues 81–101 (ALMIVGIVLSVIGLLVAIFAL) form a helical membrane-spanning segment. Topologically, residues 102–122 (KCIRMGNMDDSAKAKMTLTSG) are cytoplasmic. The helical transmembrane segment at 123–143 (IMFIIAGLCAIAGVSVFANML) threads the bilayer. Over 144–174 (VTNFWMSTASMFTSMGGMVQTVQTRYTFGAA) the chain is Extracellular. The chain crosses the membrane as a helical span at residues 175–195 (LFVGWVAGGLTLIGGVLMCIA). A required for role in regulation of RANKL-induced osteoclast differentiation region spans residues 195-261 (ACRGLAPEET…QSPPSKYDYV (67 aa)). The Cytoplasmic segment spans residues 196-261 (CRGLAPEETN…QSPPSKYDYV (66 aa)). Position 214 is a phosphoserine (serine 214). The tract at residues 228–261 (SSGFESNTRNKKIYDGGARTEDEGQSPPSKYDYV) is disordered. Residues 239 to 249 (KIYDGGARTED) show a composition bias toward basic and acidic residues.

Belongs to the claudin family. As to quaternary structure, interacts with TJP2/ZO-2. Interacts with TJP1/ZO-1. Interacts with YAP1 (phosphorylated); the interaction sequesters YAP1 away from the nucleus and thereby restricts transcription of YAP1 target genes. Interacts with CLDN19.

It localises to the cell junction. The protein localises to the tight junction. It is found in the cell membrane. In terms of biological role, involved in alveolar fluid homeostasis via regulation of alveolar epithelial tight junction composition and therefore ion transport and solute permeability, potentially via downstream regulation of the actin cytoskeleton organization and beta-2-adrenergic signaling. Required for lung alveolarization and maintenance of the paracellular alveolar epithelial barrier. Acts to maintain epithelial progenitor cell proliferation and organ size, via regulation of YAP1 localization away from the nucleus and thereby restriction of YAP1 target gene transcription. Acts as a negative regulator of RANKL-induced osteoclast differentiation, potentially via relocation of TJP2/ZO-2 away from the nucleus, subsequently involved in bone resorption in response to calcium deficiency. Mediates the osteoprotective effects of estrogen, potentially via acting downstream of estrogen signaling independently of RANKL signaling pathways. This is Claudin-18 (CLDN18) from Bos taurus (Bovine).